A 180-amino-acid chain; its full sequence is Large ribosomal subunit protein uL6 (180 aa).

This sequence belongs to the universal ribosomal protein uL6 family. Part of the 50S ribosomal subunit.

In terms of biological role, this protein binds to the 23S rRNA, and is important in its secondary structure. It is located near the subunit interface in the base of the L7/L12 stalk, and near the tRNA binding site of the peptidyltransferase center. This Clostridium botulinum (strain Okra / Type B1) protein is Large ribosomal subunit protein uL6.